The chain runs to 302 residues: Catechol 1,2-dioxygenase (302 aa).

4 residues coordinate Fe cation: Y164, Y198, H222, and H224.

It belongs to the intradiol ring-cleavage dioxygenase family. Fe(3+) serves as cofactor.

It carries out the reaction catechol + O2 = cis,cis-muconate + 2 H(+). Its pathway is aromatic compound metabolism; beta-ketoadipate pathway; 5-oxo-4,5-dihydro-2-furylacetate from catechol: step 1/3. The sequence is that of Catechol 1,2-dioxygenase (pheB) from Pseudomonas sp. (strain EST1001).